A 270-amino-acid polypeptide reads, in one-letter code: Non-structural maintenance of chromosomes element 1 homolog (270 aa).

The RING-type; atypical zinc finger occupies 185–226 (CNVCHKIAIQCQLCENCGIPLHLQCAGIYFRGIANPLCPNCK). A disordered region spans residues 236–270 (LSQVSSQGPSHSQAAPVRGRNQRSRNISTVARTSR). 2 stretches are compositionally biased toward polar residues: residues 237–248 (SQVSSQGPSHSQ) and 259–270 (SRNISTVARTSR).

Belongs to the NSE1 family. In terms of assembly, component of the SMC5-SMC6 complex.

Its subcellular location is the nucleus. It is found in the chromosome. The protein resides in the telomere. It carries out the reaction S-ubiquitinyl-[E2 ubiquitin-conjugating enzyme]-L-cysteine + [acceptor protein]-L-lysine = [E2 ubiquitin-conjugating enzyme]-L-cysteine + N(6)-ubiquitinyl-[acceptor protein]-L-lysine.. Functionally, RING-type zinc finger-containing E3 ubiquitin ligase that assembles with melanoma antigen protein (MAGE) to catalyze the direct transfer of ubiquitin from E2 ubiquitin-conjugating enzyme to a specific substrate. Within MAGE-RING ubiquitin ligase complex, MAGE stimulates and specifies ubiquitin ligase activity likely through recruitment and/or stabilization of the E2 ubiquitin-conjugating enzyme at the E3:substrate complex. Involved in maintenance of genome integrity, DNA damage response and DNA repair. The protein is Non-structural maintenance of chromosomes element 1 homolog (nsmce1) of Xenopus tropicalis (Western clawed frog).